The following is a 586-amino-acid chain: uncharacterized protein (586 aa).

2 coiled-coil regions span residues 183–293 (THTE…ELEN) and 331–400 (FKDK…DKKN).

This is an uncharacterized protein from Bacillus subtilis (strain 168).